The sequence spans 719 residues: Forkhead box protein K1 (719 aa).

Alanine 2 carries the post-translational modification N-acetylalanine. Residues 2–40 (AEVGEDSGARALLALRSAPCSPVLCAAAAAAAFPATTSP) form an interaction with SIN3A and SIN3B region. The interval 35–67 (PATTSPPPPAQPPPGPPALPAEPGPGPVPSTVA) is disordered. Residues 38–62 (TSPPPPAQPPPGPPALPAEPGPGPV) show a composition bias toward pro residues. Positions 81-406 (AASVRQSPGP…PLSSRSAPAS (326 aa)) are required for interaction with FOXO4 and MEF2C. Phosphoserine is present on serine 87. Positions 109 to 161 (VTIGRNSSQGSVDLSMGLSSFISRRHLQLSFQEPHFYLRCLGKNGVFVDGAFQ) constitute an FHA domain. Residues arginine 147 and arginine 177 each carry the omega-N-methylarginine modification. Phosphoserine occurs at positions 199, 209, 225, and 229. Phosphothreonine occurs at positions 231 and 233. A phosphoserine mark is found at serine 239, serine 243, serine 281, and serine 285. A DNA-binding region (fork-head) is located at residues 291–386 (KPPYSYAQLI…EQAFRKRRQR (96 aa)). A disordered region spans residues 399-443 (SSRSAPASPTHPGLMSPRSSGLQTPECLSREGSPIPHDPDLGSKL). A phosphoserine mark is found at serine 402 and serine 406. At threonine 408 the chain carries Phosphothreonine. Serine 414 carries the phosphoserine modification. Threonine 422 carries the phosphothreonine modification. 3 positions are modified to phosphoserine: serine 427, serine 431, and serine 445. The segment covering 665–685 (AANAAPTPAASTTTSASSSGE) has biased composition (low complexity). Positions 665–719 (AANAAPTPAASTTTSASSSGEPEVKRSRVEEPGGTATTQPTAMAATGPQGPGTGE) are disordered. The span at 686–695 (PEVKRSRVEE) shows a compositional bias: basic and acidic residues. Low complexity predominate over residues 696–712 (PGGTATTQPTAMAATGP).

In terms of assembly, interacts with SIN3A and SIN3B (via PAH2) to form a complex which represses transcription. Component of SIN3A-, but not SIN3B-, containing multiprotein complexes. Interacts with FOXO4 and MEF2C; both interactions inhibit FOXO4 and MEF2C transactivation activity. Interacts (when phosphorylated) with YWHAE/14-3-3-epsilon; promotes sequestration in the cytoplasm and leads to impaired ability to bind DNA. Interacts with FHL2. Interacts with SRF. Interacts with DVL2 and DVL3; the interaction induces DVL2 nuclear translocation. Interacts with BAP1 (when phosphorylated). Accessory component of the polycomb repressive deubiquitinase (PR-DUB) complex, at least composed of BAP1, one of ASXL1, ASXL2 or (probably) ASXL3 and one of MBD5 or MBD6. The PR-DUB core associates with a number of accessory proteins, including FOXK1, FOXK2, KDM1B, HCFC1 and OGT. Post-translationally, phosphorylation by GSK3 (GSK3A or GSK3B) promotes interaction with YWHAE/14-3-3-epsilon and retention in the cytoplasm. In response to mTORC1 signaling, phosphorylation by GSK3 is prevented, leading to translocation to the nucleus. As to expression, expressed in tissues and cells in which the myoglobin gene is transcriptionally active including cardiac and skeletal myocytes, brain and kidney. In the adult brain, expressed in the piriform cortex and the indusium griseum. In the hippocampus, expression is localized to the dentate gyrus and CA3 area. In the cerebellum, expression is confined to the Purkinje cell layer. Present in neuroretinal cells: expressed in rod bipolar cells, amacrine cells and ganglion cells (at protein level).

It is found in the nucleus. It localises to the cytoplasm. Functionally, transcriptional regulator involved in different processes such as glucose metabolism, aerobic glycolysis, muscle cell differentiation and autophagy. Recognizes and binds the forkhead DNA sequence motif (5'-GTAAACA-3') and can both act as a transcription activator or repressor, depending on the context. Together with FOXK2, acts as a key regulator of metabolic reprogramming towards aerobic glycolysis, a process in which glucose is converted to lactate in the presence of oxygen. Acts by promoting expression of enzymes for glycolysis (such as hexokinase-2 (HK2), phosphofructokinase, pyruvate kinase (PKLR) and lactate dehydrogenase), while suppressing further oxidation of pyruvate in the mitochondria by up-regulating pyruvate dehydrogenase kinases PDK1 and PDK4. Probably plays a role in gluconeogenesis during overnight fasting, when lactate from white adipose tissue and muscle is the main substrate. Involved in mTORC1-mediated metabolic reprogramming: in response to mTORC1 signaling, translocates into the nucleus and regulates the expression of genes associated with glycolysis and downstream anabolic pathways, such as HIF1A, thereby regulating glucose metabolism. Together with FOXK2, acts as a negative regulator of autophagy in skeletal muscle: in response to starvation, enters the nucleus, binds the promoters of autophagy genes and represses their expression, preventing proteolysis of skeletal muscle proteins. Acts as a transcriptional regulator of the myogenic progenitor cell population in skeletal muscle. Binds to the upstream enhancer region (CCAC box) of myoglobin (MB) gene, regulating the myogenic progenitor cell population. Promotes muscle progenitor cell proliferation by repressing the transcriptional activity of FOXO4, thereby inhibiting myogenic differentiation. Involved in remodeling processes of adult muscles that occur in response to physiological stimuli. Required to correct temporal orchestration of molecular and cellular events necessary for muscle repair. Represses myogenic differentiation by inhibiting MEFC activity. Positively regulates Wnt/beta-catenin signaling by translocating DVL into the nucleus. Reduces virus replication, probably by binding the interferon stimulated response element (ISRE) to promote antiviral gene expression. Accessory component of the polycomb repressive deubiquitinase (PR-DUB) complex; recruits the PR-DUB complex to specific FOXK1-bound genes. This Mus musculus (Mouse) protein is Forkhead box protein K1.